A 494-amino-acid polypeptide reads, in one-letter code: UPF0371 protein M6_Spy1067 (494 aa).

Belongs to the UPF0371 family.

The polypeptide is UPF0371 protein M6_Spy1067 (Streptococcus pyogenes serotype M6 (strain ATCC BAA-946 / MGAS10394)).